Consider the following 816-residue polypeptide: Leucine--tRNA ligase (816 aa).

The 'HIGH' region motif lies at 46-56; it reads PYPSGALHMGH. The 'KMSKS' region motif lies at 638 to 642; it reads KMSKS. An ATP-binding site is contributed by K641.

The protein belongs to the class-I aminoacyl-tRNA synthetase family.

It localises to the cytoplasm. It carries out the reaction tRNA(Leu) + L-leucine + ATP = L-leucyl-tRNA(Leu) + AMP + diphosphate. The polypeptide is Leucine--tRNA ligase (Xanthomonas campestris pv. campestris (strain ATCC 33913 / DSM 3586 / NCPPB 528 / LMG 568 / P 25)).